A 182-amino-acid chain; its full sequence is Glycerol-3-phosphate acyltransferase 1 (182 aa).

5 helical membrane passes run 5 to 25, 54 to 74, 81 to 101, 117 to 137, and 157 to 177; these read MQFL…AYIV, GYFI…VSIA, STFV…PIVF, IAFD…FYLI, and ILYS…VLIL.

Belongs to the PlsY family. In terms of assembly, probably interacts with PlsX.

The protein resides in the cell membrane. The enzyme catalyses an acyl phosphate + sn-glycerol 3-phosphate = a 1-acyl-sn-glycero-3-phosphate + phosphate. The protein operates within lipid metabolism; phospholipid metabolism. Functionally, catalyzes the transfer of an acyl group from acyl-phosphate (acyl-PO(4)) to glycerol-3-phosphate (G3P) to form lysophosphatidic acid (LPA). This enzyme utilizes acyl-phosphate as fatty acyl donor, but not acyl-CoA or acyl-ACP. The sequence is that of Glycerol-3-phosphate acyltransferase 1 from Bacillus cereus (strain ATCC 10987 / NRS 248).